We begin with the raw amino-acid sequence, 693 residues long: DNA ligase (693 aa).

NAD(+) contacts are provided by residues aspartate 35 to aspartate 39, serine 84 to isoleucine 85, and glutamate 121. Lysine 123 acts as the N6-AMP-lysine intermediate in catalysis. The NAD(+) site is built by arginine 144, glutamate 180, lysine 297, and lysine 321. Cysteine 418, cysteine 421, cysteine 436, and cysteine 442 together coordinate Zn(2+). The BRCT domain occupies proline 601 to glycine 690.

It belongs to the NAD-dependent DNA ligase family. LigA subfamily. Requires Mg(2+) as cofactor. Mn(2+) serves as cofactor.

It carries out the reaction NAD(+) + (deoxyribonucleotide)n-3'-hydroxyl + 5'-phospho-(deoxyribonucleotide)m = (deoxyribonucleotide)n+m + AMP + beta-nicotinamide D-nucleotide.. DNA ligase that catalyzes the formation of phosphodiester linkages between 5'-phosphoryl and 3'-hydroxyl groups in double-stranded DNA using NAD as a coenzyme and as the energy source for the reaction. It is essential for DNA replication and repair of damaged DNA. This Azoarcus sp. (strain BH72) protein is DNA ligase.